The following is a 670-amino-acid chain: uncharacterized protein (670 aa).

The next 10 membrane-spanning stretches (helical) occupy residues 23–42 (YALR…YYLN), 47–69 (YWAM…SKSL), 76–98 (LLGA…FFLL), 118–140 (VAYA…VNIT), 153–170 (VCEV…MMIL), 381–403 (QWDA…SAVA), 410–432 (SLLM…GLMV), 437–454 (LWQF…MQLL), 461–483 (FAAL…NPPV), and 493–510 (NLAK…FAIL).

Belongs to the aromatic acid exporter ArAE (TC 2.A.85) family.

The protein localises to the cell membrane. This is an uncharacterized protein from Escherichia coli O157:H7.